Reading from the N-terminus, the 251-residue chain is Hydroxyacylglutathione hydrolase (251 aa).

Residues His53, His55, Asp57, His58, His110, Asp127, and His165 each contribute to the Zn(2+) site.

It belongs to the metallo-beta-lactamase superfamily. Glyoxalase II family. Monomer. Requires Zn(2+) as cofactor.

The catalysed reaction is an S-(2-hydroxyacyl)glutathione + H2O = a 2-hydroxy carboxylate + glutathione + H(+). Its pathway is secondary metabolite metabolism; methylglyoxal degradation; (R)-lactate from methylglyoxal: step 2/2. Thiolesterase that catalyzes the hydrolysis of S-D-lactoyl-glutathione to form glutathione and D-lactic acid. The chain is Hydroxyacylglutathione hydrolase from Edwardsiella ictaluri (strain 93-146).